Consider the following 463-residue polypeptide: MMAATVVSRIRTGTGRAPVMWLSLSLVAVAAAVATEQQVPLVLWSSDRNLWAPVADTHEGHITSDMQLSTYLDPALELGPRNVLLFLQDKLSIEDFTAYGGVFGNKQDSAFSNLENALDLAPSSLVLPAVDWYAISTLTTYLQEKLGASPLHVDLATLKELKLNASLPALLLIRLPYTASSGLMAPREVLTGNDEVIGQVLSTLKSEDVPYTAALTAVRPSRVARDITMVAGGLGRQLLQTQVASPAIHPPVSYNDTAPRILFWAQNFSVAYKDEWKDLTSLTFGVENLNLTGSFWNDSFAMLSLTYEPLFGATVTFKFILASRFYPVSARYWFAMERLEIHSNGSVAHFNVSQVTGPSIYSFHCEYVSSVSKKGNLLVTNVPSVWQMTLHNFQIQAFNVTGEQFSYASDCAGFFSPGIWMGLLTTLFMLFIFTYGLHMILSLKTMDRFDDHKGPTITLTQIV.

An N-terminal signal peptide occupies residues 1 to 32; sequence MMAATVVSRIRTGTGRAPVMWLSLSLVAVAAA. The propeptide occupies 33 to 225; it reads VATEQQVPLV…TAVRPSRVAR (193 aa). Topologically, residues 33–412 are lumenal; it reads VATEQQVPLV…EQFSYASDCA (380 aa). N-linked (GlcNAc...) asparagine glycans are attached at residues Asn-164, Asn-255, Asn-267, Asn-290, Asn-297, Asn-344, Asn-351, and Asn-399. A disulfide bridge connects residues Cys-365 and Cys-411. The chain crosses the membrane as a helical span at residues 413-433; the sequence is GFFSPGIWMGLLTTLFMLFIF. Over 434 to 463 the chain is Cytoplasmic; it reads TYGLHMILSLKTMDRFDDHKGPTITLTQIV.

It belongs to the vacuolar ATPase subunit S1 family. In terms of assembly, accessory component of the multisubunit proton-transporting vacuolar (V)-ATPase protein pump. Interacts (via N-terminus) with ATP6AP2 (via N-terminus). Interacts with RNASEK. Interacts with TMEM106B (via C-terminus). In terms of processing, N-glycosylated. Expressed in brain cortex (at protein level). Highly expressed in islets of Langerhans. Expressed in pancreatic acini, pituitary gland, adrenal gland, lung, brain and bone marrow.

Its subcellular location is the endoplasmic reticulum membrane. The protein resides in the endoplasmic reticulum-Golgi intermediate compartment membrane. It localises to the cytoplasmic vesicle. The protein localises to the secretory vesicle. It is found in the synaptic vesicle membrane. Its subcellular location is the clathrin-coated vesicle membrane. In terms of biological role, accessory subunit of the proton-transporting vacuolar (V)-ATPase protein pump, which is required for luminal acidification of secretory vesicles. Guides the V-type ATPase into specialized subcellular compartments, such as neuroendocrine regulated secretory vesicles or the ruffled border of the osteoclast, thereby regulating its activity. Involved in membrane trafficking and Ca(2+)-dependent membrane fusion. May play a role in the assembly of the V-type ATPase complex. In aerobic conditions, involved in intracellular iron homeostasis, thus triggering the activity of Fe(2+) prolyl hydroxylase (PHD) enzymes, and leading to HIF1A hydroxylation and subsequent proteasomal degradation. In islets of Langerhans cells, may regulate the acidification of dense-core secretory granules. The polypeptide is V-type proton ATPase subunit S1 (Atp6ap1) (Mus musculus (Mouse)).